The chain runs to 182 residues: MLTMKDIVREGNPVLREVAKPVPVPLSDEDKQTAKRMLEFLINSQNPEIAEKYSLRPGVGLAAPQIGLSKQMIAVHTTDENEKEYSLVLFNPKIISESVEMTHLEGGEGCLSVDREVQGIVPRHARITVKAINENNEEVRLKLKGFPAIVFQHEIDHLNGIMFYDRIEGWVDPYKREINPSL.

Residues cysteine 110 and histidine 153 each coordinate Fe cation. The active site involves glutamate 154. A Fe cation-binding site is contributed by histidine 157.

It belongs to the polypeptide deformylase family. Fe(2+) is required as a cofactor.

The catalysed reaction is N-terminal N-formyl-L-methionyl-[peptide] + H2O = N-terminal L-methionyl-[peptide] + formate. Functionally, removes the formyl group from the N-terminal Met of newly synthesized proteins. Requires at least a dipeptide for an efficient rate of reaction. N-terminal L-methionine is a prerequisite for activity but the enzyme has broad specificity at other positions. The protein is Peptide deformylase of Halalkalibacterium halodurans (strain ATCC BAA-125 / DSM 18197 / FERM 7344 / JCM 9153 / C-125) (Bacillus halodurans).